A 1899-amino-acid chain; its full sequence is Protocadherin-15 (1899 aa).

A signal peptide spans 1–26 (MLQQFCLWKWLAVGIAVATILASSLA). Over 27-1376 (QNDEDCKLAR…AQAVGYTEGA (1350 aa)) the chain is Extracellular. C32 and C120 form a disulfide bridge. 11 Cadherin domains span residues 38-147 (GPPA…SPQF), 148-265 (QQQR…GPMF), 278-395 (RPLT…KPYF), 396-509 (TKST…SPTF), 510-616 (SNIS…PPRF), 617-717 (PQLM…GPVF), 719-819 (MFLP…SPVF), 820-926 (TNAS…SPVF), 927-1035 (SKTL…IPRF), 1037-1144 (QDEY…APVF), and 1145-1259 (TKKM…PPTL). Residues 1377 to 1397 (LLALAVIIILCCMPAILIVMV) form a helical membrane-spanning segment. The Cytoplasmic portion of the chain corresponds to 1398 to 1899 (SYRQRQAECA…KRFPSQSTAL (502 aa)). 3 disordered regions span residues 1668 to 1687 (SPCL…VVEP), 1700 to 1721 (HDYP…SFRI), and 1734 to 1820 (TKGE…RREL). 2 stretches are compositionally biased toward pro residues: residues 1706 to 1717 (LSPPPTRKPTPP) and 1743 to 1773 (PDPP…PPTL). The segment covering 1774-1791 (PLASVPSSSSLPSTQHLS) has biased composition (low complexity). A compositionally biased stretch (pro residues) spans 1804-1814 (AVPPPAAVPEP).

In the utricle, localizes to the distal region of the kinocilium and near the tips of the stereocilia.

It localises to the cell membrane. Calcium-dependent cell-adhesion protein. Required for inner ear neuroepithelial cell elaboration and cochlear function. Probably involved in the maintenance of normal retinal function. The chain is Protocadherin-15 (Pcdh15) from Gallus gallus (Chicken).